The following is a 1403-amino-acid chain: Baculoviral IAP repeat-containing protein 1a (1403 aa).

BIR repeat units follow at residues 63-128, 162-228, and 281-346; these read RLKT…EFLQ, RLES…EFLQ, and RMDT…VFLQ. Residues C315, C318, H335, and C342 each contribute to the Zn(2+) site. The NACHT domain occupies 464-758; it reads SVMCVEGETG…EFLAAMRLTE (295 aa). K476 provides a ligand contact to ATP.

Interacts (via NACHT domain) with APAF1 (via CARD and NACHT domains).

Its function is as follows. Anti-apoptotic protein which acts by inhibiting the activities of CASP3, CASP7 and CASP9. Can inhibit the autocleavage of pro-CASP9 and cleavage of pro-CASP3 by CASP9. Capable of inhibiting CASP9 autoproteolysis at 'Asp-315' and decreasing the rate of auto proteolysis at 'Asp-330'. Acts as a mediator of neuronal survival in pathological conditions. Prevents motor-neuron apoptosis induced by a variety of signals. This is Baculoviral IAP repeat-containing protein 1a (Naip1) from Mus musculus (Mouse).